The following is a 189-amino-acid chain: dCTP deaminase (189 aa).

DCTP-binding positions include 112–117 (KSTYAR), 136–138 (TLE), Gln157, Tyr171, and Gln181. Glu138 acts as the Proton donor/acceptor in catalysis.

Belongs to the dCTP deaminase family. As to quaternary structure, homotrimer.

It catalyses the reaction dCTP + H2O + H(+) = dUTP + NH4(+). Its pathway is pyrimidine metabolism; dUMP biosynthesis; dUMP from dCTP (dUTP route): step 1/2. Catalyzes the deamination of dCTP to dUTP. The sequence is that of dCTP deaminase from Teredinibacter turnerae (strain ATCC 39867 / T7901).